The sequence spans 604 residues: Asparagine synthetase [glutamine-hydrolyzing] 1 (604 aa).

Catalysis depends on Cys-2, which acts as the Nucleophile. A Glutamine amidotransferase type-2 domain is found at 2–186 (CGILAVLGAA…PGHLYSSAAG (185 aa)). L-glutamine contacts are provided by residues 50 to 54 (RLAIV), 75 to 77 (NGE), and Asp-99. In terms of domain architecture, Asparagine synthetase spans 211–451 (LREAFEKAVI…LPKHILYRQK (241 aa)). Residues Leu-232, Val-268, and 342–343 (SG) each bind ATP.

It catalyses the reaction L-aspartate + L-glutamine + ATP + H2O = L-asparagine + L-glutamate + AMP + diphosphate + H(+). The protein operates within amino-acid biosynthesis; L-asparagine biosynthesis. Essential for nitrogen assimilation, distribution and remobilization within the plant via the phloem. This chain is Asparagine synthetase [glutamine-hydrolyzing] 1, found in Oryza sativa subsp. japonica (Rice).